Here is a 514-residue protein sequence, read N- to C-terminus: tRNA-2-methylthio-N(6)-dimethylallyladenosine synthase (514 aa).

In terms of domain architecture, MTTase N-terminal spans 68–186 (RTFLIKTYGC…LPEILEEAYL (119 aa)). [4Fe-4S] cluster-binding residues include Cys-77, Cys-113, Cys-147, Cys-223, Cys-227, and Cys-230. Residues 209–439 (REGSTKAWVN…NKKVGHYSEK (231 aa)) enclose the Radical SAM core domain. The TRAM domain maps to 442-505 (NQYEGKTVTV…QYSLNGTFKE (64 aa)).

Belongs to the methylthiotransferase family. MiaB subfamily. Monomer. [4Fe-4S] cluster is required as a cofactor.

The protein localises to the cytoplasm. The enzyme catalyses N(6)-dimethylallyladenosine(37) in tRNA + (sulfur carrier)-SH + AH2 + 2 S-adenosyl-L-methionine = 2-methylsulfanyl-N(6)-dimethylallyladenosine(37) in tRNA + (sulfur carrier)-H + 5'-deoxyadenosine + L-methionine + A + S-adenosyl-L-homocysteine + 2 H(+). Its function is as follows. Catalyzes the methylthiolation of N6-(dimethylallyl)adenosine (i(6)A), leading to the formation of 2-methylthio-N6-(dimethylallyl)adenosine (ms(2)i(6)A) at position 37 in tRNAs that read codons beginning with uridine. In Staphylococcus haemolyticus (strain JCSC1435), this protein is tRNA-2-methylthio-N(6)-dimethylallyladenosine synthase.